The following is a 406-amino-acid chain: Argininosuccinate synthase (406 aa).

ATP contacts are provided by residues 11–19 and Ala-38; that span reads AYSGGLDTS. 2 residues coordinate L-citrulline: Tyr-91 and Ser-96. Gly-121 provides a ligand contact to ATP. Residues Thr-123, Asn-127, and Asp-128 each contribute to the L-aspartate site. Asn-127 contacts L-citrulline. L-citrulline contacts are provided by Arg-131, Ser-181, Ser-190, Glu-266, and Tyr-278.

Belongs to the argininosuccinate synthase family. Type 1 subfamily. Homotetramer.

It localises to the cytoplasm. The catalysed reaction is L-citrulline + L-aspartate + ATP = 2-(N(omega)-L-arginino)succinate + AMP + diphosphate + H(+). The protein operates within amino-acid biosynthesis; L-arginine biosynthesis; L-arginine from L-ornithine and carbamoyl phosphate: step 2/3. The sequence is that of Argininosuccinate synthase from Campylobacter jejuni (strain RM1221).